The sequence spans 395 residues: Acetyl-CoA acetyltransferase (395 aa).

Catalysis depends on cysteine 90, which acts as the Acyl-thioester intermediate. 2 residues coordinate CoA: tyrosine 185 and lysine 230. Position 185 (tyrosine 185) interacts with K(+). K(+) is bound by residues alanine 246, alanine 247, and alanine 249. Serine 250 contacts CoA. A K(+)-binding site is contributed by valine 347. Catalysis depends on proton acceptor residues histidine 351 and cysteine 381.

The protein belongs to the thiolase-like superfamily. Thiolase family. In terms of assembly, homotetramer.

The protein localises to the cytoplasm. The catalysed reaction is 2 acetyl-CoA = acetoacetyl-CoA + CoA. It functions in the pathway metabolic intermediate biosynthesis; (R)-mevalonate biosynthesis; (R)-mevalonate from acetyl-CoA: step 1/3. In terms of biological role, acetyl-CoA acetyltransferase; part of the first module of ergosterol biosynthesis pathway that includes the early steps of the pathway, conserved across all eukaryotes, and which results in the formation of mevalonate from acetyl-coenzyme A (acetyl-CoA). Erg10 catalyzes the formation of acetoacetyl-CoA from acetyl-CoA. The first module starts with the action of the cytosolic acetyl-CoA acetyltransferase eg10 that catalyzes the formation of acetoacetyl-CoA. The hydroxymethylglutaryl-CoA synthases erg13 then condenses acetyl-CoA with acetoacetyl-CoA to form HMG-CoA. The rate-limiting step of the early module is the reduction to mevalonate by the 3-hydroxy-3-methylglutaryl-coenzyme A (HMG-CoA) reductases hcs1. The sequence is that of Acetyl-CoA acetyltransferase (erg10) from Schizosaccharomyces pombe (strain 972 / ATCC 24843) (Fission yeast).